A 109-amino-acid polypeptide reads, in one-letter code: Large ribosomal subunit protein uL24 (109 aa).

It belongs to the universal ribosomal protein uL24 family. As to quaternary structure, part of the 50S ribosomal subunit.

Its function is as follows. One of two assembly initiator proteins, it binds directly to the 5'-end of the 23S rRNA, where it nucleates assembly of the 50S subunit. In terms of biological role, one of the proteins that surrounds the polypeptide exit tunnel on the outside of the subunit. In Rickettsia akari (strain Hartford), this protein is Large ribosomal subunit protein uL24.